The primary structure comprises 1372 residues: DNA-directed RNA polymerase subunit beta (1372 aa).

This sequence belongs to the RNA polymerase beta chain family. As to quaternary structure, the RNAP catalytic core consists of 2 alpha, 1 beta, 1 beta' and 1 omega subunit. When a sigma factor is associated with the core the holoenzyme is formed, which can initiate transcription.

It catalyses the reaction RNA(n) + a ribonucleoside 5'-triphosphate = RNA(n+1) + diphosphate. Its function is as follows. DNA-dependent RNA polymerase catalyzes the transcription of DNA into RNA using the four ribonucleoside triphosphates as substrates. The polypeptide is DNA-directed RNA polymerase subunit beta (Bradyrhizobium sp. (strain ORS 278)).